The primary structure comprises 317 residues: MLSRSQDKTMTKPISPLLPIAYSKEVASAKQRGAPLVALESTIITHGMPYPGNIEMARSVEAIIREQGAVPATIAVIHGTLHIGLEAAELEQLAKATEVMKVSRADLAFAIAERRTGATTVAATMIAAARAGIRVFATGGIGGVHRGAEESFDISADLEELARTGVIVVCAGAKAILDIPKTLEVLETRGVPVVTYESEEFPAFWSRSSGIRSPLSLNSPAAIANFQTVREQLGIDGGMLVANPVPEADEIASEEMEIYIERALDSAERDEVTGKAVTPYLLSTIFDLTDGQSLKTNIALVENNARLAAEIAVALGE.

Glu-40 serves as the catalytic Proton donor. Positions 101 and 121 each coordinate substrate. Mn(2+) is bound at residue Asp-153. 155 to 157 (SAD) contributes to the substrate binding site. Residue Lys-174 is the Nucleophile of the active site.

The protein belongs to the pseudouridine-5'-phosphate glycosidase family. Homotrimer. The cofactor is Mn(2+).

The enzyme catalyses D-ribose 5-phosphate + uracil = psi-UMP + H2O. Functionally, catalyzes the reversible cleavage of pseudouridine 5'-phosphate (PsiMP) to ribose 5-phosphate and uracil. Functions biologically in the cleavage direction, as part of a pseudouridine degradation pathway. This is Pseudouridine-5'-phosphate glycosidase 1 from Rhizobium johnstonii (strain DSM 114642 / LMG 32736 / 3841) (Rhizobium leguminosarum bv. viciae).